Here is a 242-residue protein sequence, read N- to C-terminus: Mitochondrial intermembrane space import and assembly protein 40 (242 aa).

Residues 1–18 (MFARSFSNASRTIARRSL) constitute a mitochondrion transit peptide. The span at 1–22 (MFARSFSNASRTIARRSLSTRS) shows a compositional bias: polar residues. The segment at 1-30 (MFARSFSNASRTIARRSLSTRSGPAPSSLW) is disordered. The Mitochondrial matrix portion of the chain corresponds to 19–34 (STRSGPAPSSLWSSRN). A helical; Signal-anchor for type II membrane protein membrane pass occupies residues 35–51 (AVIAGTTLAITALAVTS). Over 52 to 242 (ERRKVFNESA…EETAAPAAAP (191 aa)) the chain is Mitochondrial intermembrane. Positions 58-111 (NESAQKATSPRDSIIAQDSLKENVHKKSVRQDEFSGESTKPEASTSSDSVEKAA) are disordered. The segment covering 59-68 (ESAQKATSPR) has biased composition (polar residues). The span at 76-90 (SLKENVHKKSVRQDE) shows a compositional bias: basic and acidic residues. Positions 93 to 105 (GESTKPEASTSSD) are enriched in polar residues. Cystine bridges form between Cys144/Cys146, Cys155/Cys188, and Cys165/Cys178. The region spanning 152–196 (TGPCGEQFKAAFSCFVYSEAEPKGVDCVELFKVMQDCFREHPEIY) is the CHCH domain. 2 consecutive short sequence motifs (cx9C motif) follow at residues 155–165 (CGEQFKAAFSC) and 178–188 (CVELFKVMQDC). A disordered region spans residues 215 to 242 (DEAPPQEGTMEEKVEAAKEETAAPAAAP). The span at 224-235 (MEEKVEAAKEET) shows a compositional bias: basic and acidic residues.

As to quaternary structure, monomer. Requires Cu(2+) as cofactor. Zn(2+) is required as a cofactor.

It localises to the mitochondrion inner membrane. In terms of biological role, required for the import and folding of small cysteine-containing proteins (small Tim) in the mitochondrial intermembrane space (IMS). Forms a redox cycle with ERV1 that involves a disulfide relay system. Precursor proteins to be imported into the IMS are translocated in their reduced form into the mitochondria. The oxidized form of MIA40 forms a transient intermolecular disulfide bridge with the reduced precursor protein, resulting in oxidation of the precursor protein that now contains an intramolecular disulfide bond and is able to undergo folding in the IMS. This is Mitochondrial intermembrane space import and assembly protein 40 (MIA40) from Cryptococcus neoformans var. neoformans serotype D (strain B-3501A) (Filobasidiella neoformans).